Consider the following 204-residue polypeptide: INSIG protein homolog (204 aa).

Helical transmembrane passes span 5-27, 47-64, 76-97, 101-118, and 124-145; these read ISEA…HSHV, FWFP…AELR, ARQA…ALVH, VVPV…TWCV, and GAAC…LVQL. H26 lines the a 1,2-diacyl-sn-glycerol pocket. Residue Y150 coordinates a 1,2-diacyl-sn-glycerol. The helical transmembrane segment at 162–179 threads the bilayer; that stretch reads PFLAPLYFAFGVVAALLG.

Belongs to the INSIG family. In terms of assembly, homotrimer.

The protein resides in the membrane. Functionally, diacylglycerol-binding protein. The sequence is that of INSIG protein homolog from Mycolicibacterium vanbaalenii (strain DSM 7251 / JCM 13017 / BCRC 16820 / KCTC 9966 / NRRL B-24157 / PYR-1) (Mycobacterium vanbaalenii).